The primary structure comprises 977 residues: Ephrin type-A receptor 1 (977 aa).

The first 26 residues, 1–26, serve as a signal peptide directing secretion; the sequence is MERRWPLGLALLLLLLCAPLPPGARA. Topologically, residues 27 to 548 are extracellular; it reads EEVTLMDTST…PVSRSLTGGE (522 aa). The region spanning 28–210 is the Eph LBD domain; that stretch reads EVTLMDTSTA…FYQRCAETVH (183 aa). Fibronectin type-III domains lie at 333–446 and 448–539; these read PPSA…MGHA and SLSG…TSPP. 2 N-linked (GlcNAc...) asparagine glycosylation sites follow: Asn-415 and Asn-479. The helical transmembrane segment at 549-569 threads the bilayer; it reads IVAVIFGLLLGIALLIGIYVF. Residues 570-977 lie on the Cytoplasmic side of the membrane; it reads RSRRGQRQRQ…ILCSIQGFKD (408 aa). Phosphotyrosine; by autocatalysis occurs at positions 600 and 606. The Protein kinase domain occupies 625–885; it reads LIVDTVIGEG…QLQAHLEQLL (261 aa). ATP contacts are provided by residues 631–639 and Lys-657; that span reads IGEGEFGEV. Asp-750 functions as the Proton acceptor in the catalytic mechanism. A Phosphotyrosine; by autocatalysis modification is found at Tyr-782. Residues Ser-907 and Ser-911 each carry the phosphoserine modification. In terms of domain architecture, SAM spans 914 to 977; sequence IPYRSVSEWL…ILCSIQGFKD (64 aa). The PDZ-binding motif lies at 975–977; it reads FKD.

It belongs to the protein kinase superfamily. Tyr protein kinase family. Ephrin receptor subfamily. In terms of assembly, homodimer. Forms a signaling complex with LCK; PTK2B/PYK2 and PI3-kinase upon activation by EFNA1; regulates T-lymphocytes migration. Interacts (via SAM domain) with ILK (via ANK repeats); stimulated by EFNA1 but independent of the kinase activity of EPHA1. Interacts (kinase activity-dependent) with PTK2/FAK1. In terms of processing, phosphorylated. Autophosphorylation is stimulated by its ligand EFNA1. Ubiquitinated. Preferentially expressed in epithelial cells including skin, kidney, liver and thymus. Expressed in myogenic progenitor cells.

Its subcellular location is the cell membrane. The enzyme catalyses L-tyrosyl-[protein] + ATP = O-phospho-L-tyrosyl-[protein] + ADP + H(+). Receptor tyrosine kinase which binds promiscuously membrane-bound ephrin-A family ligands residing on adjacent cells, leading to contact-dependent bidirectional signaling into neighboring cells. The signaling pathway downstream of the receptor is referred to as forward signaling while the signaling pathway downstream of the ephrin ligand is referred to as reverse signaling. Binds with a low affinity EFNA3 and EFNA4 and with a high affinity to EFNA1 which most probably constitutes its cognate/functional ligand. Upon activation by EFNA1 induces cell attachment to the extracellular matrix inhibiting cell spreading and motility through regulation of ILK and downstream RHOA and RAC. Also plays a role in angiogenesis and regulates cell proliferation. May play a role in apoptosis. This chain is Ephrin type-A receptor 1 (Epha1), found in Mus musculus (Mouse).